The following is a 597-amino-acid chain: Arginine--tRNA ligase (597 aa).

Residues 138-148 (ANPTGPMHVGH) carry the 'HIGH' region motif.

The protein belongs to the class-I aminoacyl-tRNA synthetase family. As to quaternary structure, monomer.

Its subcellular location is the cytoplasm. The enzyme catalyses tRNA(Arg) + L-arginine + ATP = L-arginyl-tRNA(Arg) + AMP + diphosphate. The sequence is that of Arginine--tRNA ligase from Rhodopseudomonas palustris (strain ATCC BAA-98 / CGA009).